We begin with the raw amino-acid sequence, 428 residues long: Ectoine/5-hydroxyectoine TRAP transporter large permease protein UehC (428 aa).

Transmembrane regions (helical) follow at residues 9 to 29, 49 to 69, 99 to 119, 139 to 159, 172 to 192, 217 to 237, 242 to 262, 273 to 293, 302 to 322, 324 to 344, 366 to 386, and 400 to 420; these read MIVLLLLGFPMMIPLIAGAFI, LAGIRPASLIAVPMFIFAADI, AAACTMFGAVSGSTQATVVAI, ALIVNASDIAFLIPPSIGMII, FIAGIGPGLLILVLFSAYAYI, ALWPMGFPVIIIGGIYGGVFS, AAACVLYALVLEVLVFRSMSL, GLITAIVFILVGAGAAFSWVI, ILGAIGIAEMGPIGVLFVISI, FFIGCMFVDPIVVILVLVPVF, VAIGSATPPFGCDIFTAIAVF, and FILMLLGVSVALIFFPQIALF.

This sequence belongs to the TRAP transporter large permease family. As to quaternary structure, the complex comprises the extracytoplasmic solute receptor protein UehA, and the two transmembrane proteins UehB and UehC.

It is found in the cell inner membrane. In terms of biological role, part of the tripartite ATP-independent periplasmic (TRAP) transport system UehABC, which imports both ectoine and 5-hydroxyectoine as nutrients, and not as osmoprotectants. In Ruegeria pomeroyi (strain ATCC 700808 / DSM 15171 / DSS-3) (Silicibacter pomeroyi), this protein is Ectoine/5-hydroxyectoine TRAP transporter large permease protein UehC.